The chain runs to 58 residues: Large ribosomal subunit protein bL33 (58 aa).

It belongs to the bacterial ribosomal protein bL33 family.

In Brachyspira hyodysenteriae (strain ATCC 49526 / WA1), this protein is Large ribosomal subunit protein bL33.